Here is a 323-residue protein sequence, read N- to C-terminus: MPDSFSKIPIPVILGATGSGKTATAIALAELLDAEIVSADSRQIYKELDIGTAKPTAEERRAVKHHFIDELEVTEPYNAAQFATDAATRIEAIFSTGKNVVVAGGSTLYLQGLLQGFSKLPENSPEVREKLYADLAEHGATALYEKLKAADPEHAATLDPTKTQRLIRSLEILEVSSKTVSELKAAEILKPGFHFVPFGLALPRERLYEKINLRTDEMFKNGFLEEATRLFEKYAPVMRQGVKINALATVGYNELFSFLEGKLSLDEAKNLVKQHTRNYAKRQLTFFRNKFSADWINFAETDENALETAKQILMKLKKANPFC.

15–22 (GATGSGKT) provides a ligand contact to ATP. 17-22 (TGSGKT) provides a ligand contact to substrate. Interaction with substrate tRNA stretches follow at residues 40 to 43 (DSRQ) and 164 to 168 (QRLIR).

This sequence belongs to the IPP transferase family. Monomer. It depends on Mg(2+) as a cofactor.

The enzyme catalyses adenosine(37) in tRNA + dimethylallyl diphosphate = N(6)-dimethylallyladenosine(37) in tRNA + diphosphate. Functionally, catalyzes the transfer of a dimethylallyl group onto the adenine at position 37 in tRNAs that read codons beginning with uridine, leading to the formation of N6-(dimethylallyl)adenosine (i(6)A). The chain is tRNA dimethylallyltransferase from Chloroherpeton thalassium (strain ATCC 35110 / GB-78).